The chain runs to 50 residues: Fungus-induced-related protein 15 (50 aa).

An N-terminal signal peptide occupies residues 1-21 (MNFYSLFVFIALIFSFNVVHG).

Its function is as follows. May have role in hypoxia response. The protein is Fungus-induced-related protein 15 (fipr-15) of Caenorhabditis elegans.